A 477-amino-acid polypeptide reads, in one-letter code: Ankyrin repeat, SAM and basic leucine zipper domain-containing protein 1 (477 aa).

3 positions are modified to phosphoserine: S17, S18, and S20. 6 ANK repeats span residues 46–76 (EKKE…SVDA), 80–109 (YGWT…NASF), 112–146 (DKQT…DPNV), 150–179 (RLMT…EVNT), 183–212 (NGYT…NKML), and 216–245 (DGKL…PLEG). The SAM domain occupies 274–336 (SYAAFGDLEV…KILAALKELE (63 aa)).

Interacts with DDX4, PIWIL1, RANBP9 and TDRD1.

It localises to the cytoplasm. Plays a central role during spermatogenesis by repressing transposable elements and preventing their mobilization, which is essential for the germline integrity. Acts via the piRNA metabolic process, which mediates the repression of transposable elements during meiosis by forming complexes composed of piRNAs and Piwi proteins and governs the methylation and subsequent repression of transposons. Its association with pi-bodies suggests a participation in the primary piRNAs metabolic process. Required prior to the pachytene stage to facilitate the production of multiple types of piRNAs, including those associated with repeats involved in the regulation of retrotransposons. May act by mediating protein-protein interactions during germ cell maturation. The sequence is that of Ankyrin repeat, SAM and basic leucine zipper domain-containing protein 1 (ASZ1) from Callithrix jacchus (White-tufted-ear marmoset).